The chain runs to 125 residues: Small ribosomal subunit protein bS6 (125 aa).

This sequence belongs to the bacterial ribosomal protein bS6 family.

Functionally, binds together with bS18 to 16S ribosomal RNA. The chain is Small ribosomal subunit protein bS6 from Campylobacter jejuni (strain RM1221).